The chain runs to 183 residues: Apo-citrate lyase phosphoribosyl-dephospho-CoA transferase (183 aa).

Belongs to the CitX family.

It carries out the reaction apo-[citrate lyase ACP] + 2'-(5''-triphospho-alpha-D-ribosyl)-3'-dephospho-CoA = holo-[citrate lyase ACP] + diphosphate. In terms of biological role, transfers 2-(5''-triphosphoribosyl)-3'-dephosphocoenzyme-A on a serine residue to the apo-acyl carrier protein (gamma chain) of the citrate lyase to yield holo-acyl carrier protein. The protein is Apo-citrate lyase phosphoribosyl-dephospho-CoA transferase of Citrobacter koseri (strain ATCC BAA-895 / CDC 4225-83 / SGSC4696).